The chain runs to 420 residues: Subtilisin-like protease 7 (420 aa).

The first 20 residues, 1–20, serve as a signal peptide directing secretion; the sequence is MGFITKAIPLALAAASVING. A propeptide spanning residues 21–119 is cleaved from the precursor; it reads AEIMETRAGV…IERDARVQIN (99 aa). One can recognise an Inhibitor I9 domain in the interval 36 to 118; the sequence is KYIVVMNDGM…YIERDARVQI (83 aa). The Peptidase S8 domain maps to 129–413; that stretch reads SWGLARVGSK…SFPLNIYEEQ (285 aa). Residues D161 and H192 each act as charge relay system in the active site. N-linked (GlcNAc...) asparagine glycans are attached at residues N222 and N252. The Charge relay system role is filled by S346. N-linked (GlcNAc...) asparagine glycosylation occurs at N396.

Belongs to the peptidase S8 family.

The protein resides in the secreted. Functionally, secreted subtilisin-like serine protease with keratinolytic activity that contributes to pathogenicity. In Arthroderma benhamiae (strain ATCC MYA-4681 / CBS 112371) (Trichophyton mentagrophytes), this protein is Subtilisin-like protease 7 (SUB7).